Consider the following 66-residue polypeptide: uncharacterized protein (66 aa).

The helical transmembrane segment at 11–31 threads the bilayer; the sequence is PFPLLGVWIIVIIIVAVIGLL.

It localises to the membrane. This is an uncharacterized protein from Chenopodium amaranticolor (Quinoa).